The chain runs to 92 residues: LYR motif-containing protein 4 homolog (92 aa).

Residues 48-68 adopt a coiled-coil conformation; it reads AEIDRQMAEGQQNLELIRRQV.

This sequence belongs to the complex I LYR family. Component of the mitochondrial core iron-sulfur cluster (ISC) assembly complex at least composed of the cysteine desulfurase Nfs1, the scaffold protein IscU, the accessory protein bcn92/Isd11/Lyrm4, and probably fh/frataxin. Interacts with Nfs1.

The protein localises to the mitochondrion. Stabilizing factor of the core iron-sulfur cluster (ISC) assembly complex that regulates the stability and cysteine desulfurase activity of Nfs1 and participates in the [2Fe-2S] clusters assembly on the scaffolding protein IscU. This is LYR motif-containing protein 4 homolog from Drosophila melanogaster (Fruit fly).